The primary structure comprises 79 residues: Small ribosomal subunit protein bS16 (79 aa).

Belongs to the bacterial ribosomal protein bS16 family.

The protein is Small ribosomal subunit protein bS16 of Nitratidesulfovibrio vulgaris (strain ATCC 29579 / DSM 644 / CCUG 34227 / NCIMB 8303 / VKM B-1760 / Hildenborough) (Desulfovibrio vulgaris).